Here is a 625-residue protein sequence, read N- to C-terminus: Interferon-induced GTP-binding protein Mx2 (625 aa).

The Dynamin-type G domain maps to 29-302; it reads DLALPAIAVI…LVFHIGRCLP (274 aa). Positions 39 to 46 are G1 motif; that stretch reads GDQSSGKS. 39–46 is a GTP binding site; it reads GDQSSGKS. A G2 motif region spans residues 64 to 66; sequence VTR. Residues 140–143 form a G3 motif region; that stretch reads DLPG. GTP contacts are provided by residues 140–144 and 209–212; these read DLPGI and TKPD. Positions 209–212 are G4 motif; the sequence is TKPD. The tract at residues 241–244 is G5 motif; it reads RCRG. The region spanning 539–625 is the GED domain; that stretch reads REELTCHLKS…TEALKYLAKF (87 aa).

The protein belongs to the TRAFAC class dynamin-like GTPase superfamily. Dynamin/Fzo/YdjA family.

It localises to the cytoplasm. The polypeptide is Interferon-induced GTP-binding protein Mx2 (mx2) (Ictalurus punctatus (Channel catfish)).